Consider the following 338-residue polypeptide: General transcription and DNA repair factor IIH subunit TFB4 (338 aa).

M1 carries the post-translational modification N-acetylmethionine. The C4-type zinc-finger motif lies at 289 to 308 (CSVCLCVLSIIPPGNKCPAC).

This sequence belongs to the TFB4 family. Component of the 7-subunit TFIIH core complex composed of XPB/SSL2, XPD/RAD3, SSL1, TFB1, TFB2, TFB4 and TFB5, which is active in NER. The core complex associates with the 3-subunit CTD-kinase module TFIIK composed of CCL1, KIN28 and TFB3 to form the 10-subunit holoenzyme (holo-TFIIH) active in transcription. An additionnal subunit, TFB6, plays a role in the dissociation of the SSL2 helicase from TFIIH after transcription initiation.

The protein localises to the nucleus. In terms of biological role, component of the general transcription and DNA repair factor IIH (TFIIH) core complex, which is involved in general and transcription-coupled nucleotide excision repair (NER) of damaged DNA and, when complexed to TFIIK, in RNA transcription by RNA polymerase II. In NER, TFIIH acts by opening DNA around the lesion to allow the excision of the damaged oligonucleotide and its replacement by a new DNA fragment. In transcription, TFIIH has an essential role in transcription initiation. When the pre-initiation complex (PIC) has been established, TFIIH is required for promoter opening and promoter escape. Phosphorylation of the C-terminal tail (CTD) of the largest subunit of RNA polymerase II by the kinase module TFIIK controls the initiation of transcription. This Saccharomyces cerevisiae (strain ATCC 204508 / S288c) (Baker's yeast) protein is General transcription and DNA repair factor IIH subunit TFB4 (TFB4).